The following is an 86-amino-acid chain: Protein Vpu (86 aa).

Topologically, residues 1-12 are extracellular; the sequence is MVDLLAKVDYRI. Residues 13-33 traverse the membrane as a helical segment; it reads VIVAFIVALIIAIVVWTIAYI. Topologically, residues 34 to 86 are cytoplasmic; sequence EYRKLLRQRRIDRLIKRTRERAEDSGNESDGDTEELSTMVDMGNLRLLDVNDL. Residues 52–71 form a disordered region; the sequence is RERAEDSGNESDGDTEELST. Residues Ser58 and Ser62 each carry the phosphoserine; by host CK2 modification. Over residues 58–68 the composition is skewed to acidic residues; that stretch reads SGNESDGDTEE.

Belongs to the HIV-1 VPU protein family. In terms of assembly, homopentamer. Interacts with host CD4 and BRTC; these interactions induce proteasomal degradation of CD4. Interacts with host BST2; this interaction leads to the degradation of host BST2. Interacts with host FBXW11. Interacts with host AP1M1; this interaction plays a role in the mistrafficking and subsequent degradation of host BST2. Interacts with host RANBP2; this interaction allows Vpu to down-regulate host BLM sumoylation. In terms of processing, phosphorylated by host CK2. This phosphorylation is necessary for interaction with human BTRC and degradation of CD4.

The protein resides in the host membrane. With respect to regulation, ion channel activity is inhibited by hexamethylene amiloride in vitro. Its function is as follows. Enhances virion budding by targeting host CD4 and Tetherin/BST2 to proteasome degradation. Degradation of CD4 prevents any unwanted premature interactions between viral Env and its host receptor CD4 in the endoplasmic reticulum. Degradation of antiretroviral protein Tetherin/BST2 is important for virion budding, as BST2 tethers new viral particles to the host cell membrane. Mechanistically, Vpu bridges either CD4 or BST2 to BTRC, a substrate recognition subunit of the Skp1/Cullin/F-box protein E3 ubiquitin ligase, induces their ubiquitination and subsequent proteasomal degradation. The alteration of the E3 ligase specificity by Vpu seems to promote the degradation of host IKBKB, leading to NF-kappa-B down-regulation and subsequent apoptosis. Acts as a viroporin that forms an oligomeric ion channel in membranes. Modulates the host DNA repair mechanisms to promote degradation of nuclear viral cDNA in cells that are already productively infected in order to suppress immune sensing and proviral hyper-integration (superinfection). Manipulates PML-NBs and modulates SUMOylation of host BLM protein thereby enhancing its DNA-end processing activity toward viral unintegrated linear DNA. Also inhibits RAD52-mediated homologous repair of viral cDNA, preventing the generation of dead-end circular forms of single copies of the long terminal repeat and permitting sustained nucleolytic attack. The sequence is that of Protein Vpu from Homo sapiens (Human).